The following is a 311-amino-acid chain: 1,4-dihydroxy-2-naphthoate octaprenyltransferase (311 aa).

9 helical membrane-spanning segments follow: residues 31-51, 53-73, 104-126, 131-153, 157-177, 182-202, 220-240, 242-262, and 290-310; these read LTASFVPVLLGTVLAMFYVKV, LLLFLAMLFSCLWIQIATNLF, TILQLALASYGIAILLGVYICAS, LALIGLVGMAIGYLYTGGPLPIA, FGELFSGICMGSVFVLISFFI, INMQSILISIPIAILVGAINL, LAILMGHKGAVTLLAASFAVA, IWVVGLVITGAASPWLFVVFL, and TAQTNTFFGFLLSIGLLISYF.

The protein belongs to the MenA family. Type 1 subfamily.

It localises to the cell membrane. The catalysed reaction is an all-trans-polyprenyl diphosphate + 1,4-dihydroxy-2-naphthoate + H(+) = a 2-demethylmenaquinol + CO2 + diphosphate. It participates in quinol/quinone metabolism; menaquinone biosynthesis; menaquinol from 1,4-dihydroxy-2-naphthoate: step 1/2. In terms of biological role, conversion of 1,4-dihydroxy-2-naphthoate (DHNA) to demethylmenaquinone (DMK). This chain is 1,4-dihydroxy-2-naphthoate octaprenyltransferase, found in Bacillus subtilis (strain 168).